Here is a 254-residue protein sequence, read N- to C-terminus: UPF0603 protein YdjH (254 aa).

Positions 1 to 29 (MRGFFGKAIFVVLAVFIMMPLLGIEAVRA) are cleaved as a signal peptide. A helical transmembrane segment spans residues 166 to 186 (IFFTWWFQLIAAIAVGGIAVS). Positions 223-235 (VTRERKPSDKDSG) are enriched in basic and acidic residues. Residues 223–254 (VTRERKPSDKDSGSDGGVTKGGTSYSGSRGSF) are disordered. Polar residues predominate over residues 243–254 (GGTSYSGSRGSF).

This sequence belongs to the UPF0603 family.

Its subcellular location is the cell membrane. This chain is UPF0603 protein YdjH (ydjH), found in Bacillus subtilis (strain 168).